A 203-amino-acid chain; its full sequence is Small ribosomal subunit protein uS4c (203 aa).

The S4 RNA-binding domain occupies 92-150 (MRLDNIIYRLGMAPTIANARQLVNHGHIVVNDRIVTIPSYRCKPKDIISVRNNSTSRNV).

The protein belongs to the universal ribosomal protein uS4 family. As to quaternary structure, part of the 30S ribosomal subunit. Contacts protein S5. The interaction surface between S4 and S5 is involved in control of translational fidelity.

Its subcellular location is the plastid. It is found in the chloroplast. Functionally, one of the primary rRNA binding proteins, it binds directly to 16S rRNA where it nucleates assembly of the body of the 30S subunit. Its function is as follows. With S5 and S12 plays an important role in translational accuracy. This Chlorokybus atmophyticus (Soil alga) protein is Small ribosomal subunit protein uS4c (rps4).